A 662-amino-acid chain; its full sequence is ATP-dependent RNA helicase DDX3X (662 aa).

N-acetylserine is present on S2. Residues S2–P139 are required for TBK1 and IKBKE-dependent IFNB1 activation. Positions L12–L21 match the Nuclear export signal motif. The disordered stretch occupies residues L19–E144. Residues L21–S34 are compositionally biased toward polar residues. An interaction with EIF4E region spans residues Y38–R44. The segment covering R44–A68 has biased composition (basic and acidic residues). Residue K55 is modified to N6-acetyllysine. Residues S70–G89 are compositionally biased toward low complexity. Positions K81–S90 are interaction with VACV protein K7. A phosphoserine mark is found at S82, S86, and S90. An involved in binding to RNA G-quadruplex region spans residues R88–G123. Residues G94–K130 show a composition bias toward basic and acidic residues. Residues G100–R110 are interaction with IKBKE. The segment at G100–N662 is interaction with GSK3B. The residue at position 101 (R101) is an Omega-N-methylarginine. Residue S102 is modified to Phosphoserine; by IKKE. A Phosphotyrosine modification is found at Y104. The residue at position 110 (R110) is an Omega-N-methylarginine. N6-acetyllysine is present on K118. The residue at position 131 (S131) is a Phosphoserine. The tract at residues P139–G172 is interaction with CHUK. A Q motif motif is present at residues E180–K208. S181 is modified (phosphoserine; by TBK1; in vitro). Phosphoserine; by TBK1 is present on S183. Position 200 to 207 (Y200 to Q207) interacts with ATP. The Helicase ATP-binding domain maps to I211 to L403. K215 is covalently cross-linked (Glycyl lysine isopeptide (Lys-Gly) (interchain with G-Cter in SUMO2)). An ATP-binding site is contributed by A224 to T231. At S240 the chain carries Phosphoserine; by TBK1; in vitro. Residues A250–R259 form an involved in stimulation of ATPase activity by DNA and RNA, nucleic acid binding and unwinding and HIV-1 replication region. A Phosphoserine; by TBK1; in vitro modification is found at S269. Residues D347 to D350 carry the DEAD box motif. The interval G409 to N662 is interaction with HCV core protein. The Helicase C-terminal domain maps to N414–A575. Position 429 is a phosphoserine; by CSNK1E and TBK1; in vitro (S429). At T438 the chain carries Phosphothreonine; by TBK1; in vitro. 2 positions are modified to phosphoserine; by TBK1; in vitro: S442 and S456. T469 carries the phosphothreonine; by CSNK1E; in vitro modification. S470 carries the phosphoserine; by CSNK1E; in vitro modification. S520 carries the phosphoserine; by TBK1; in vitro modification. Residues G536–G661 are interaction with NXF1. T542 bears the Phosphothreonine; by TBK1; in vitro mark. Phosphoserine; by CSNK1E and TBK1; in vitro is present on S543. Omega-N-methylarginine is present on R592. Residues S594, S605, and S612 each carry the phosphoserine modification. Positions D601–F634 are disordered. A compositionally biased stretch (low complexity) spans Q604–R622. Omega-N-methylarginine is present on residues R617 and R632. Over residues S623–F634 the composition is skewed to gly residues.

The protein belongs to the DEAD box helicase family. DDX3/DED1 subfamily. Homodimer; can bind RNA as a monomer and as a dimer/oligomer. Interacts with TDRD3. Interacts (when phosphorylated at Ser-102) with IRF3; the interaction facilitates the phosphorylation and activation of IRF3 by IKBKE. Directly interacts with XPO1/CRM1. The interaction with XPO1/CMR1 is dependent on the DDX3X nuclear export signal motif and XPO1 interaction with GTPase RAN in its active GTP-bound form. Weakly interacts with TBKBP1/SINTBAD. Directly interacts with TRAF3; this interaction stimulates TRAF3 'Lys-63' ubiquitination. Interacts with CSNK1E in a Wnt-dependent manner; this interaction greatly enhances CSNK1E affinity for ATP, stimulates its kinase activity and promotes CSNK1E-mediated DVL2 phosphorylation. In the presence of RNA, the interaction is decreased. Also interacts with CSNK1D and stimulates its kinase activity. Interacts with TRPV4; this interaction is decreased when the TRPV4 channel is activated, leading to DDX3X relocalization to the nucleus. Interacts with MAP3K14/NIK. Directly interacts with CHUK/IKKA after physiological activation of the TLR7 and TLR8 pathways; this interaction enhances CHUK autophosphorylation. May associate with EIF4F complex, composed of at least EIF4A, EIF4E and EIF4G1/EIF4G3. Directly interacts with EIF4E in an RNA-independent manner; this interaction enhances EIF4E cap-binding ability. Directly interacts with EIF4G1 in an RNA-independent manner. DDX3X competes with EIF4G1 for interaction with EIF4E. Interacts with EIF4A1 and EIF2S1 in an RNA-independent manner. Associates with the eukaryotic translation initiation factor 3 (eIF-3) complex, including with EIF3B and EIF3C subunits. Directly interacts with IKBKE/IKKE; this interaction stimulates IKBKE activating autophosphorylation and is induced upon viral infection. Interacts with TBK1. Interacts with SP1; this interaction potentiates SP1-induced CDKN1A/WAF1/CIP1 transcription. Interacts with GSK3A and GSK3B. Interacts with several death receptors, inclusing FAS, TNFRSF10A and TNFRSF10B. Recruited to TNFRSF10B in the absence of receptor stimulation. When TNFRSF10B is stimulated, further recruited to the receptor and cleaved by caspases. A large proteolytic fragment remains associated with TNFRSF10B. Interacts (via C-terminus) with NXF1/TAP; this interaction may be partly involved in DDX3X nuclear export and in NXF1 localization to stress granules. Identified in an mRNP complex, composed of at least DHX9, DDX3X, ELAVL1, HNRNPU, IGF2BP1/2, ILF3, PABPC1, PCBP2, PTBP2, STAU1, STAU2, SYNCRIP and YBX1. The interaction with IGF2BP1/2 is RNA-dependent. Directly interacts with PABPC1/PABP1 in an RNA-independent manner. This interaction increases in stressed cells and decreases during cell recovery. Interacts (via C-terminus) with MAVS/IPS-1; this interaction occurs rapidly, but transiently after Sendai virus infection. The interaction potentiates MAVS-mediated IFNB induction. Interacts with ERCC6/CBS. Interacts with DHX33 in an RNA-independent manner. Interacts with DDX5 in the cytoplasm; this interaction may be more efficient when both proteins are unphosphorylated. Interacts with RIGI/RIG-1. Interacts with IFIH1/MDA5. Interacts with NCAPH; this interaction may be important for the NCAPH localization at condensing chromosomes during mitosis. Interacts with NLRP3 (via NACHT domain) under inflammasome-activating conditions. Interacts with CAPRIN1. Interacts with HNF4A and NR0B2/SHP in an RNA-independent manner; this interaction disrupts the interaction between HNF4 and NR0B2 that forms inactive heterodimers and enhances the formation of active HNF4 homodimers. Interacts with CREBBP/CBP. Interacts with EP300/p300. Interacts with gamma-tubulin. Interacts with phosphorylated TP53. Directly interacts with RELA/p65; this interaction may trap RELA in the cytoplasm, impairing nuclear relocalization upon TNF activating signals. In terms of assembly, (Microbial infection) Interacts with hepatitis B virus (HBV) polymerase in the cytoplasm; this interaction may inhibit DDX3X interaction with the IKBKE/TBK1 complex, and hence impair IKBKE/TBK1-mediated increase in IFNB production. As to quaternary structure, (Microbial infection) Directly interacts with hepatitis C virus (HCV) core protein in the cytoplasm. (Microbial infection) Interacts with vaccinia virus (VACV) protein K7. In terms of assembly, (Microbial infection) Interacts with HIV-1 protein Rev. As to quaternary structure, (Microbial infection) Interacts with Venezuelan equine encephalitis virus non-structural protein 3. Post-translationally, phosphorylated by TBK1; the phosphorylation is required for the synergistic induction of IFNB mediated by TBK1 and DDX3X. Phosphorylated by IKBKE at Ser-102 after ssRNA viral infection; enhances the induction of INFB promoter by IRF3. The cytoplasmic form is highly phosphorylated in the G1/S phase of the cell cycle and much less at G2/M. Phosphorylation by CSNK1E may inhibit RNA-stimulated ATPase activity. Upon stimulation of death receptors, including TNFRSF10B, recruited to receptors and cleaved by caspases. Proteolytic fragments remain associated with the receptors. This cleavage presumably inactivates DDX3X anti-apoptotic function. In terms of processing, ubiquitinated by RNF39 via 'Lys-48'-linked ubiquitination; leading to proteasomal degradation. In terms of tissue distribution, widely expressed. In testis, expressed in spermatids. Expressed in epidermis and liver (at protein level).

Its subcellular location is the cell membrane. It localises to the nucleus. The protein localises to the cytoplasm. The protein resides in the stress granule. It is found in the inflammasome. Its subcellular location is the cell projection. It localises to the lamellipodium. The protein localises to the cytoskeleton. The protein resides in the microtubule organizing center. It is found in the centrosome. The enzyme catalyses ATP + H2O = ADP + phosphate + H(+). Multifunctional ATP-dependent RNA helicase. The ATPase activity can be stimulated by various ribo-and deoxynucleic acids indicative for a relaxed substrate specificity. In vitro can unwind partially double-stranded DNA with a preference for 5'-single-stranded DNA overhangs. Binds RNA G-quadruplex (rG4s) structures, including those located in the 5'-UTR of NRAS mRNA. Involved in many cellular processes, which do not necessarily require its ATPase/helicase catalytic activities. Involved in transcription regulation. Positively regulates CDKN1A/WAF1/CIP1 transcription in an SP1-dependent manner, hence inhibits cell growth. This function requires its ATPase, but not helicase activity. CDKN1A up-regulation may be cell-type specific. Binds CDH1/E-cadherin promoter and represses its transcription. Potentiates HNF4A-mediated MTTP transcriptional activation; this function requires ATPase, but not helicase activity. Facilitates HNF4A acetylation, possibly catalyzed by CREBBP/EP300, thereby increasing the DNA-binding affinity of HNF4 to its response element. In addition, disrupts the interaction between HNF4 and SHP that forms inactive heterodimers and enhances the formation of active HNF4 homodimers. By promoting HNF4A-induced MTTP expression, may play a role in lipid homeostasis. May positively regulate TP53 transcription. Associates with mRNPs, predominantly with spliced mRNAs carrying an exon junction complex (EJC). Involved in the regulation of translation initiation. Not involved in the general process of translation, but promotes efficient translation of selected complex mRNAs, containing highly structured 5'-untranslated regions (UTR). This function depends on helicase activity. Might facilitate translation by resolving secondary structures of 5'-UTRs during ribosome scanning. Alternatively, may act prior to 43S ribosomal scanning and promote 43S pre-initiation complex entry to mRNAs exhibiting specific RNA motifs, by performing local remodeling of transcript structures located close to the cap moiety. Independently of its ATPase activity, promotes the assembly of functional 80S ribosomes and disassembles from ribosomes prior to the translation elongation process. Positively regulates the translation of cyclin E1/CCNE1 mRNA and consequently promotes G1/S-phase transition during the cell cycle. May activate TP53 translation. Required for endoplasmic reticulum stress-induced ATF4 mRNA translation. Independently of its ATPase/helicase activity, enhances IRES-mediated translation; this activity requires interaction with EIF4E. Independently of its ATPase/helicase activity, has also been shown specifically repress cap-dependent translation, possibly by acting on translation initiation factor EIF4E. Involved in innate immunity, acting as a viral RNA sensor. Binds viral RNAs and promotes the production of type I interferon (IFN-alpha and IFN-beta). Potentiate MAVS/RIGI-mediated induction of IFNB in early stages of infection. Enhances IFNB1 expression via IRF3/IRF7 pathway and participates in NFKB activation in the presence of MAVS and TBK1. Involved in TBK1 and IKBKE-dependent IRF3 activation leading to IFNB induction, acts as a scaffolding adapter that links IKBKE and IRF3 and coordinates their activation. Involved in the TLR7/TLR8 signaling pathway leading to type I interferon induction, including IFNA4 production. In this context, acts as an upstream regulator of IRF7 activation by MAP3K14/NIK and CHUK/IKKA. Stimulates CHUK autophosphorylation and activation following physiological activation of the TLR7 and TLR8 pathways, leading to MAP3K14/CHUK-mediated activatory phosphorylation of IRF7. Also stimulates MAP3K14/CHUK-dependent NF-kappa-B signaling. Negatively regulates TNF-induced IL6 and IL8 expression, via the NF-kappa-B pathway. May act by interacting with RELA/p65 and trapping it in the cytoplasm. May also bind IFNB promoter; the function is independent of IRF3. Involved in both stress and inflammatory responses. Independently of its ATPase/helicase activity, required for efficient stress granule assembly through its interaction with EIF4E, hence promotes survival in stressed cells. Independently of its helicase activity, regulates NLRP3 inflammasome assembly through interaction with NLRP3 and hence promotes cell death by pyroptosis during inflammation. This function is independent of helicase activity. Therefore DDX3X availability may be used to interpret stress signals and choose between pro-survival stress granules and pyroptotic NLRP3 inflammasomes and serve as a live-or-die checkpoint in stressed cells. In association with GSK3A/B, negatively regulates extrinsic apoptotic signaling pathway via death domain receptors, including TNFRSF10B, slowing down the rate of CASP3 activation following death receptor stimulation. Cleavage by caspases may inactivate DDX3X and relieve the inhibition. Independently of its ATPase/helicase activity, allosteric activator of CSNK1E. Stimulates CSNK1E-mediated phosphorylation of DVL2, thereby involved in the positive regulation of Wnt/beta-catenin signaling pathway. Also activates CSNK1A1 and CSNK1D in vitro, but it is uncertain if these targets are physiologically relevant. ATPase and casein kinase-activating functions are mutually exclusive. May be involved in mitotic chromosome segregation. Functionally, (Microbial infection) Facilitates hepatitis C virus (HCV) replication. During infection, HCV core protein inhibits the interaction between MAVS and DDX3X and therefore impairs MAVS-dependent INFB induction and might recruit DDX3X to HCV replication complex. Its function is as follows. (Microbial infection) Facilitates HIV-1 replication. Acts as a cofactor for XPO1-mediated nuclear export of HIV-1 Rev RNAs. This function is strongly stimulated in the presence of TBK1 and requires DDX3X ATPase activity. In terms of biological role, (Microbial infection) Facilitates Zika virus (ZIKV) replication. (Microbial infection) Facilitates Dengue virus (DENV) replication. Functionally, (Microbial infection) Facilitates Venezuelan equine encephalitis virus (VEEV) replication. In Homo sapiens (Human), this protein is ATP-dependent RNA helicase DDX3X (DDX3X).